The following is a 323-amino-acid chain: MFNFANFYQLIAQDTRLQPWLNVLPQQLTDWQNAEHGDFGRWLKALNKIPEGSPDQVDIKNSVTISNDTPFHEGELKKLENLLRTFHPWRKGPYTVHGIHIDTEWRSDWKWDRVLPHISPLKNRSVLDVGCGNGYHMWRMLGEGARLCVGIDPSHLFLIQFEAIRKLMGGDQRAHLLPLGIEQLPKLEAFDTVFSMGVLYHRRSPLDHLIQLKDQLVSGGELVLETLVIEGDENAVLVPTSRYAQMRNVYFFPSAKALKVWLELVGFEDVHIVDENVTSVDEQRTTDWMTHNSLPDYLDPNDPSKTVEGYPAPRRAVLVARKP.

Carboxy-S-adenosyl-L-methionine-binding positions include K91, W105, K110, G130, 152-154 (DPS), 181-182 (IE), M196, Y200, and R315.

This sequence belongs to the class I-like SAM-binding methyltransferase superfamily. CmoB family. Homotetramer.

It catalyses the reaction carboxy-S-adenosyl-L-methionine + 5-hydroxyuridine(34) in tRNA = 5-carboxymethoxyuridine(34) in tRNA + S-adenosyl-L-homocysteine + H(+). Catalyzes carboxymethyl transfer from carboxy-S-adenosyl-L-methionine (Cx-SAM) to 5-hydroxyuridine (ho5U) to form 5-carboxymethoxyuridine (cmo5U) at position 34 in tRNAs. The protein is tRNA U34 carboxymethyltransferase of Vibrio parahaemolyticus serotype O3:K6 (strain RIMD 2210633).